A 229-amino-acid chain; its full sequence is Cytochrome c oxidase subunit 2 (229 aa).

Residues 1–26 (MATWSNLGLQDSASPLMEQLNFFHDH) lie on the Mitochondrial intermembrane side of the membrane. A helical transmembrane segment spans residues 27 to 48 (TLLILIMITILVGYLMLMLFFN). At 49 to 62 (KFTNRFLLHGQTIE) the chain is on the mitochondrial matrix side. Residues 63 to 82 (IIWTILPAIVLMFIALPSLR) form a helical membrane-spanning segment. Residues 83 to 229 (ILYLLDEINS…IKWITAMNSN (147 aa)) are Mitochondrial intermembrane-facing. 6 residues coordinate Cu cation: His161, Cys196, Glu198, Cys200, His204, and Met207. Residue Glu198 coordinates Mg(2+).

Belongs to the cytochrome c oxidase subunit 2 family. As to quaternary structure, component of the cytochrome c oxidase (complex IV, CIV), a multisubunit enzyme composed of a catalytic core of 3 subunits and several supernumerary subunits. The complex exists as a monomer or a dimer and forms supercomplexes (SCs) in the inner mitochondrial membrane with ubiquinol-cytochrome c oxidoreductase (cytochrome b-c1 complex, complex III, CIII). Cu cation serves as cofactor.

It is found in the mitochondrion inner membrane. It catalyses the reaction 4 Fe(II)-[cytochrome c] + O2 + 8 H(+)(in) = 4 Fe(III)-[cytochrome c] + 2 H2O + 4 H(+)(out). In terms of biological role, component of the cytochrome c oxidase, the last enzyme in the mitochondrial electron transport chain which drives oxidative phosphorylation. The respiratory chain contains 3 multisubunit complexes succinate dehydrogenase (complex II, CII), ubiquinol-cytochrome c oxidoreductase (cytochrome b-c1 complex, complex III, CIII) and cytochrome c oxidase (complex IV, CIV), that cooperate to transfer electrons derived from NADH and succinate to molecular oxygen, creating an electrochemical gradient over the inner membrane that drives transmembrane transport and the ATP synthase. Cytochrome c oxidase is the component of the respiratory chain that catalyzes the reduction of oxygen to water. Electrons originating from reduced cytochrome c in the intermembrane space (IMS) are transferred via the dinuclear copper A center (CU(A)) of subunit 2 and heme A of subunit 1 to the active site in subunit 1, a binuclear center (BNC) formed by heme A3 and copper B (CU(B)). The BNC reduces molecular oxygen to 2 water molecules using 4 electrons from cytochrome c in the IMS and 4 protons from the mitochondrial matrix. The polypeptide is Cytochrome c oxidase subunit 2 (COII) (Simulium vittatum (Striped black fly)).